We begin with the raw amino-acid sequence, 426 residues long: 3-phosphoshikimate 1-carboxyvinyltransferase (426 aa).

Lysine 22, serine 23, and arginine 27 together coordinate 3-phosphoshikimate. Residue lysine 22 coordinates phosphoenolpyruvate. 2 residues coordinate phosphoenolpyruvate: glycine 96 and arginine 124. 7 residues coordinate 3-phosphoshikimate: serine 170, serine 171, glutamine 172, serine 198, aspartate 314, asparagine 337, and lysine 341. Phosphoenolpyruvate is bound at residue glutamine 172. Aspartate 314 acts as the Proton acceptor in catalysis. Residues arginine 345, arginine 387, and lysine 412 each coordinate phosphoenolpyruvate.

The protein belongs to the EPSP synthase family. Monomer.

The protein resides in the cytoplasm. The enzyme catalyses 3-phosphoshikimate + phosphoenolpyruvate = 5-O-(1-carboxyvinyl)-3-phosphoshikimate + phosphate. It participates in metabolic intermediate biosynthesis; chorismate biosynthesis; chorismate from D-erythrose 4-phosphate and phosphoenolpyruvate: step 6/7. In terms of biological role, catalyzes the transfer of the enolpyruvyl moiety of phosphoenolpyruvate (PEP) to the 5-hydroxyl of shikimate-3-phosphate (S3P) to produce enolpyruvyl shikimate-3-phosphate and inorganic phosphate. In Shewanella sp. (strain MR-7), this protein is 3-phosphoshikimate 1-carboxyvinyltransferase.